Reading from the N-terminus, the 156-residue chain is Small ribosomal subunit protein uS7 (156 aa).

It belongs to the universal ribosomal protein uS7 family. As to quaternary structure, part of the 30S ribosomal subunit. Contacts proteins S9 and S11.

One of the primary rRNA binding proteins, it binds directly to 16S rRNA where it nucleates assembly of the head domain of the 30S subunit. Is located at the subunit interface close to the decoding center, probably blocks exit of the E-site tRNA. The polypeptide is Small ribosomal subunit protein uS7 (Desulfovibrio desulfuricans (strain ATCC 27774 / DSM 6949 / MB)).